The following is a 496-amino-acid chain: Ankyrin repeat domain-containing protein 53 (496 aa).

Over residues 1–15 the composition is skewed to low complexity; sequence MASAGSTARRAGSGS. A disordered region spans residues 1–66; the sequence is MASAGSTARR…RPSEESDQTT (66 aa). Residues 51-60 show a composition bias toward basic and acidic residues; it reads AESKQPRPSE. ANK repeat units follow at residues 105–135, 139–172, and 176–205; these read KGFTAIHFAAQRGKLACLQVLVEEYKFPVNL, NSQTPLHLVIHKDNTTVALPCIYYLLEKGAALNA, and NGCTPLHLAVREGLLDCVKVLVQSGANVHA. The tract at residues 292-320 is disordered; the sequence is LVSNTKQARATALSKTPEQRGSQCSSSFH.

As to quaternary structure, interacts with PSRC1; recruited by PSRC1 to the spindle during mitosis. Post-translationally, phosphorylated during mitosis.

It is found in the cytoplasm. The protein localises to the cytoskeleton. Its subcellular location is the spindle. It localises to the spindle pole. Required for normal progression through mitosis. Involved in chromosome alignment and cytokinesis via regulation of microtubules polymerization. This chain is Ankyrin repeat domain-containing protein 53 (ANKRD53), found in Macaca fascicularis (Crab-eating macaque).